Consider the following 462-residue polypeptide: MVQRAVPSIGPSLGSSAPGFGTDGIRGRAGTELSPALCLQVGYWIGRVLKADGPVLIGMDSRSSGSMLVAALTAGLTAAGRDVWELGLCATPAVPLLIREVGAAGGLMVSASHNPPADNGIKVFGADGTKLSAERQARVETGLRGEVEDDGPSRCGRSVQRQDLLRSYQDKLLSSVGDRRLNGVPIVLDLCWGSATACAAEVFQTLGADLTVLHGQPDGERINVACGSTQLDPLRQAVVAQGAVMGFAFDGDADRMLAVDARGRVVDGDHVLYLWGSVLQDQKALPGDRLVATVMSNLGFERAWERRGGELERTPVGDQHVHAAMVANGAALGGEQSGHILAASHGLCGDGVLTALQLATLCHGQDIALSDWLDRSFKAYPQKLVNVTVPDRARRKGWSSCMPLQEAVLQAEASMGAAGRVLVRASGTEPVLRVMVESEDQSLVDRWTQHLAAMADEHLNAA.

Residue Ser-112 is the Phosphoserine intermediate of the active site. Positions 112, 250, 252, and 254 each coordinate Mg(2+). Ser-112 is subject to Phosphoserine.

It belongs to the phosphohexose mutase family. It depends on Mg(2+) as a cofactor. Post-translationally, activated by phosphorylation.

It catalyses the reaction alpha-D-glucosamine 1-phosphate = D-glucosamine 6-phosphate. Catalyzes the conversion of glucosamine-6-phosphate to glucosamine-1-phosphate. The polypeptide is Phosphoglucosamine mutase (Parasynechococcus marenigrum (strain WH8102)).